Here is a 761-residue protein sequence, read N- to C-terminus: Ribonucleoside-diphosphate reductase 1 subunit alpha (761 aa).

One can recognise an ATP-cone domain in the interval 5–95; that stretch reads LLVTKRDGST…IFHLRKKAYG (91 aa). ATP contacts are provided by residues Lys9, 15 to 21, Thr55, and Lys91; that span reads ERINLDK. Thr209 is a binding site for GDP. Cys225 and Cys462 are disulfide-bonded. DTTP-binding positions include 232 to 234, Arg262, and Arg269; that span reads DSL. Position 283 is an N6-acetyllysine (Lys283). Residue Asn437 participates in GDP binding. Asn437 functions as the Proton acceptor in the catalytic mechanism. Cys439 serves as the catalytic Cysteine radical intermediate. GDP-binding positions include Glu441 and 623–625; that span reads ETS. The active-site Proton acceptor is the Glu441.

It belongs to the ribonucleoside diphosphate reductase large chain family. Tetramer of two alpha (R1) and two beta (R2) subunits. The B1 protein is a dimer of alpha subunits. A radical transfer pathway occurs between 'Tyr-122' of R2 and R1. Post-translationally, binding of the substrate occurs primarily when the active-site cysteines are reduced.

The enzyme catalyses a 2'-deoxyribonucleoside 5'-diphosphate + [thioredoxin]-disulfide + H2O = a ribonucleoside 5'-diphosphate + [thioredoxin]-dithiol. Under complex allosteric control mediated by deoxynucleoside triphosphates and ATP binding to separate specificity and activation sites on the alpha subunit. The type of nucleotide bound at the specificity site determines substrate preference. It seems probable that ATP makes the enzyme reduce CDP and UDP, dGTP favors ADP reduction and dTTP favors GDP reduction. Stimulated by ATP and inhibited by dATP binding to the activity site. In vitro, its activity is increased by dithiothreitol (DTT) or thioredoxins (non-specific). Inhibited by hydroxyurea, leads to dNTP depletion, replication fork arrest and genomic instability. Provides the precursors necessary for DNA synthesis. Catalyzes the biosynthesis of deoxyribonucleotides from the corresponding ribonucleotides. R1 contains the binding sites for both substrates and allosteric effectors and carries out the actual reduction of the ribonucleotide. It also provides redox-active cysteines. This is Ribonucleoside-diphosphate reductase 1 subunit alpha (nrdA) from Escherichia coli (strain K12).